We begin with the raw amino-acid sequence, 351 residues long: Methionine import ATP-binding protein MetN (351 aa).

An ABC transporter domain is found at 4-249; the sequence is VQLDHVSVTF…PKAELTQKFV (246 aa). 41–48 is an ATP binding site; that stretch reads GFSGAGKS.

This sequence belongs to the ABC transporter superfamily. Methionine importer (TC 3.A.1.24) family. In terms of assembly, the complex is composed of two ATP-binding proteins (MetN), two transmembrane proteins (MetI) and a solute-binding protein (MetQ).

The protein localises to the cell membrane. It catalyses the reaction L-methionine(out) + ATP + H2O = L-methionine(in) + ADP + phosphate + H(+). The enzyme catalyses D-methionine(out) + ATP + H2O = D-methionine(in) + ADP + phosphate + H(+). In terms of biological role, part of the ABC transporter complex MetNIQ involved in methionine import. Responsible for energy coupling to the transport system. This Lactobacillus delbrueckii subsp. bulgaricus (strain ATCC 11842 / DSM 20081 / BCRC 10696 / JCM 1002 / NBRC 13953 / NCIMB 11778 / NCTC 12712 / WDCM 00102 / Lb 14) protein is Methionine import ATP-binding protein MetN.